The sequence spans 119 residues: Protein TusC (119 aa).

The protein belongs to the DsrF/TusC family. In terms of assembly, heterohexamer, formed by a dimer of trimers. The hexameric TusBCD complex contains 2 copies each of TusB, TusC and TusD. The TusBCD complex interacts with TusE.

The protein resides in the cytoplasm. In terms of biological role, part of a sulfur-relay system required for 2-thiolation of 5-methylaminomethyl-2-thiouridine (mnm(5)s(2)U) at tRNA wobble positions. The polypeptide is Protein TusC (Sodalis glossinidius (strain morsitans)).